A 343-amino-acid polypeptide reads, in one-letter code: Glyceraldehyde-3-phosphate dehydrogenase (343 aa).

Residues 13–14 and Gly111 contribute to the NAD(+) site; that span reads TI. 140–142 is a binding site for D-glyceraldehyde 3-phosphate; the sequence is SCN. Residue Cys141 is the Nucleophile of the active site. Arg169 provides a ligand contact to NAD(+). Position 195 to 196 (195 to 196) interacts with D-glyceraldehyde 3-phosphate; sequence HA. Gln302 contributes to the NAD(+) binding site.

The protein belongs to the glyceraldehyde-3-phosphate dehydrogenase family. In terms of assembly, homotetramer.

Its subcellular location is the cytoplasm. It carries out the reaction D-glyceraldehyde 3-phosphate + phosphate + NADP(+) = (2R)-3-phospho-glyceroyl phosphate + NADPH + H(+). It catalyses the reaction D-glyceraldehyde 3-phosphate + phosphate + NAD(+) = (2R)-3-phospho-glyceroyl phosphate + NADH + H(+). It functions in the pathway carbohydrate degradation; glycolysis; pyruvate from D-glyceraldehyde 3-phosphate: step 1/5. This is Glyceraldehyde-3-phosphate dehydrogenase from Hyperthermus butylicus (strain DSM 5456 / JCM 9403 / PLM1-5).